We begin with the raw amino-acid sequence, 455 residues long: Chromosomal replication initiator protein DnaA (455 aa).

Positions 1–73 (MTISPQYIWN…LEEVETIVGY (73 aa)) are domain I, interacts with DnaA modulators. The segment at 73-114 (YPIAVKLTTSQEQNLRIVDKNKDNLSSTKLQNKRQQESPKLN) is domain II. A domain III, AAA+ region region spans residues 115–331 (QLNPRYNFSR…GALIRAVTYI (217 aa)). Residues G159, G161, K162, and T163 each contribute to the ATP site. The domain IV, binds dsDNA stretch occupies residues 332–455 (SISGLSMTVE…RINIASRNQN (124 aa)).

Belongs to the DnaA family. Oligomerizes as a right-handed, spiral filament on DNA at oriC.

Its subcellular location is the cytoplasm. In terms of biological role, plays an essential role in the initiation and regulation of chromosomal replication. ATP-DnaA binds to the origin of replication (oriC) to initiate formation of the DNA replication initiation complex once per cell cycle. Binds the DnaA box (a 9 base pair repeat at the origin) and separates the double-stranded (ds)DNA. Forms a right-handed helical filament on oriC DNA; dsDNA binds to the exterior of the filament while single-stranded (ss)DNA is stabiized in the filament's interior. The ATP-DnaA-oriC complex binds and stabilizes one strand of the AT-rich DNA unwinding element (DUE), permitting loading of DNA polymerase. After initiation quickly degrades to an ADP-DnaA complex that is not apt for DNA replication. Binds acidic phospholipids. This Crocosphaera subtropica (strain ATCC 51142 / BH68) (Cyanothece sp. (strain ATCC 51142)) protein is Chromosomal replication initiator protein DnaA.